The following is a 445-amino-acid chain: MSERKFFGTDGIRGKVGSGQMTPELALKLGWAAGRVLSRSGTNKVIIGKDTRISGYMFESALEAGLSAAGLNVMLMGPMPTPAVAYLTRTFRAEAGVVISASHNPYYDNGIKFFSNDGSKLDDNLELEIEAELEKPLECVESHLLGKVSRIEDARGRYIEYCKGNFPADQTLTGLKIVVDCAHGATYHIAPAVFRELGAEVIAIGDKPNGVNINDKVGATSMAKICETVLTEGADLGIALDGDGDRIMMVNSRGEVIDGDQILYILACDAKARGVLRGGVVGTLMSNLGLDLALQALDIPFARSKVGDRYVMELLKELDWRIGGENSGHILNLDHGTTGDGIVAGILVLAAMRRQNATLEQLTAPMEMLPQVLVNVRFEGEHDPLSSDKVKAAQAQVESQLGARGRVLLRKSGTEPLIRVMVEGDDHNTVLAHANLIADAVKSAS.

Catalysis depends on Ser-102, which acts as the Phosphoserine intermediate. Mg(2+) is bound by residues Ser-102, Asp-241, Asp-243, and Asp-245. At Ser-102 the chain carries Phosphoserine.

Belongs to the phosphohexose mutase family. It depends on Mg(2+) as a cofactor. Activated by phosphorylation.

The enzyme catalyses alpha-D-glucosamine 1-phosphate = D-glucosamine 6-phosphate. Catalyzes the conversion of glucosamine-6-phosphate to glucosamine-1-phosphate. The chain is Phosphoglucosamine mutase 1 from Shewanella sp. (strain MR-7).